Consider the following 709-residue polypeptide: Polyribonucleotide nucleotidyltransferase (709 aa).

Residues Asp-486 and Asp-492 each contribute to the Mg(2+) site. In terms of domain architecture, KH spans 553–612 (PRIHTIKINPDKIKDVIGKGGSVIRALTEETGTTIEIEDDGTVKIAATDGEKAKHAISRI). Residues 622–690 (GRIYAGKVTR…RQGRVRLSIK (69 aa)) enclose the S1 motif domain.

It belongs to the polyribonucleotide nucleotidyltransferase family. In terms of assembly, component of the RNA degradosome, which is a multiprotein complex involved in RNA processing and mRNA degradation. It depends on Mg(2+) as a cofactor.

It is found in the cytoplasm. It catalyses the reaction RNA(n+1) + phosphate = RNA(n) + a ribonucleoside 5'-diphosphate. Functionally, involved in mRNA degradation. Catalyzes the phosphorolysis of single-stranded polyribonucleotides processively in the 3'- to 5'-direction. In Photorhabdus luminescens (Xenorhabdus luminescens), this protein is Polyribonucleotide nucleotidyltransferase.